The sequence spans 449 residues: Adenylosuccinate synthetase (449 aa).

Residues 37-43 (GDEGKGK) and 65-67 (GHT) contribute to the GTP site. Catalysis depends on Asp38, which acts as the Proton acceptor. 2 residues coordinate Mg(2+): Asp38 and Gly65. IMP contacts are provided by residues 38–41 (DEGK), 63–66 (NAGH), Thr155, Arg169, Asn247, Thr262, and Arg326. The Proton donor role is filled by His66. A substrate-binding site is contributed by 322 to 328 (VTTKRKR). GTP is bound by residues Arg328, 354 to 356 (KLD), and 437 to 439 (GVG).

It belongs to the adenylosuccinate synthetase family. Homodimer. Mg(2+) serves as cofactor.

It localises to the cytoplasm. The enzyme catalyses IMP + L-aspartate + GTP = N(6)-(1,2-dicarboxyethyl)-AMP + GDP + phosphate + 2 H(+). It functions in the pathway purine metabolism; AMP biosynthesis via de novo pathway; AMP from IMP: step 1/2. Its function is as follows. Plays an important role in the de novo pathway and in the salvage pathway of purine nucleotide biosynthesis. Catalyzes the first committed step in the biosynthesis of AMP from IMP. This chain is Adenylosuccinate synthetase, found in Drosophila willistoni (Fruit fly).